A 767-amino-acid polypeptide reads, in one-letter code: Transferrin receptor protein 1 (767 aa).

The Cytoplasmic portion of the chain corresponds to 1–67; the sequence is MDQARSAFSN…LTKPKRFNGS (67 aa). Phosphoserine occurs at positions 9 and 18. A Phosphotyrosine modification is found at Y19. Positions 19–22 match the Endocytosis signal motif; sequence YTRF. T20 bears the Phosphothreonine mark. S23 is subject to Phosphoserine. Residues 60 to 63 carry the Stop-transfer sequence motif; sequence KPKR. The chain crosses the membrane as a helical; Signal-anchor for type II membrane protein span at residues 68 to 88; it reads FCYAVIAVIIFFLIGFMIGYL. C69 is lipidated: S-palmitoyl cysteine. Over 89–767 the chain is Extracellular; it reads GYCKRVEPKS…GDIWDIDNEF (679 aa). The segment covering 96–110 has biased composition (basic and acidic residues); the sequence is PKSECGRSGDSKEIE. A disordered region spans residues 96–122; sequence PKSECGRSGDSKEIEGTEPPETEEYFP. A compositionally biased stretch (acidic residues) spans 111-121; the sequence is GTEPPETEEYF. N-linked (GlcNAc...) asparagine glycosylation is found at N211, N258, and N324. The PA domain maps to 230–320; sequence SKATTVTGKL…GTGDPYTPGF (91 aa). The segment at 576–767 is ligand-binding; the sequence is TMDTYEVLSQ…GDIWDIDNEF (192 aa). A Cell attachment site motif is present at residues 653 to 655; that stretch reads RGD. A glycan (N-linked (GlcNAc...) asparagine) is linked at N734.

Belongs to the peptidase M28 family. M28B subfamily. Homodimer; disulfide-linked. Binds one transferrin or HFE molecule per subunit. Interacts with SH3BP4. Interacts with STEAP3; facilitates TFRC endocytosis in erythroid precursor cells. Post-translationally, stearoylated by ZDHHC6 which inhibits TFRC-mediated activation of the JNK pathway and promotes mitochondrial fragmentation. Stearoylation does not affect iron uptake.

The protein resides in the cell membrane. It localises to the melanosome. Functionally, cellular uptake of iron occurs via receptor-mediated endocytosis of ligand-occupied transferrin receptor into specialized endosomes. Endosomal acidification leads to iron release. The apotransferrin-receptor complex is then recycled to the cell surface with a return to neutral pH and the concomitant loss of affinity of apotransferrin for its receptor. Transferrin receptor is necessary for development of erythrocytes and the nervous system. Positively regulates T and B cell proliferation through iron uptake. Acts as a lipid sensor that regulates mitochondrial fusion by regulating activation of the JNK pathway. When dietary levels of stearate (C18:0) are low, promotes activation of the JNK pathway, resulting in HUWE1-mediated ubiquitination and subsequent degradation of the mitofusin MFN2 and inhibition of mitochondrial fusion. When dietary levels of stearate (C18:0) are high, TFRC stearoylation inhibits activation of the JNK pathway and thus degradation of the mitofusin MFN2. Mediates uptake of NICOL1 into fibroblasts where it may regulate extracellular matrix production. This chain is Transferrin receptor protein 1 (TFRC), found in Equus caballus (Horse).